The sequence spans 266 residues: 3-methyl-2-oxobutanoate hydroxymethyltransferase 2 (266 aa).

Aspartate 45 and aspartate 84 together coordinate Mg(2+). 3-methyl-2-oxobutanoate contacts are provided by residues 45–46 (DS), aspartate 84, and lysine 112. Glutamate 114 is a Mg(2+) binding site. The Proton acceptor role is filled by glutamate 181.

It belongs to the PanB family. As to quaternary structure, homodecamer; pentamer of dimers. It depends on Mg(2+) as a cofactor.

It localises to the cytoplasm. The catalysed reaction is 3-methyl-2-oxobutanoate + (6R)-5,10-methylene-5,6,7,8-tetrahydrofolate + H2O = 2-dehydropantoate + (6S)-5,6,7,8-tetrahydrofolate. Its pathway is cofactor biosynthesis; (R)-pantothenate biosynthesis; (R)-pantoate from 3-methyl-2-oxobutanoate: step 1/2. Catalyzes the reversible reaction in which hydroxymethyl group from 5,10-methylenetetrahydrofolate is transferred onto alpha-ketoisovalerate to form ketopantoate. This chain is 3-methyl-2-oxobutanoate hydroxymethyltransferase 2, found in Pseudomonas aeruginosa (strain UCBPP-PA14).